We begin with the raw amino-acid sequence, 291 residues long: tRNA U34 carboxymethyltransferase (291 aa).

Carboxy-S-adenosyl-L-methionine-binding positions include lysine 61, tryptophan 75, lysine 80, glycine 100, 122–124, 149–150, tyrosine 169, and arginine 284; these read DPS and VE.

It belongs to the class I-like SAM-binding methyltransferase superfamily. CmoB family. In terms of assembly, homotetramer.

It catalyses the reaction carboxy-S-adenosyl-L-methionine + 5-hydroxyuridine(34) in tRNA = 5-carboxymethoxyuridine(34) in tRNA + S-adenosyl-L-homocysteine + H(+). Catalyzes carboxymethyl transfer from carboxy-S-adenosyl-L-methionine (Cx-SAM) to 5-hydroxyuridine (ho5U) to form 5-carboxymethoxyuridine (cmo5U) at position 34 in tRNAs. This chain is tRNA U34 carboxymethyltransferase, found in Campylobacter jejuni (strain RM1221).